The primary structure comprises 598 residues: 2-succinyl-5-enolpyruvyl-6-hydroxy-3-cyclohexene-1-carboxylate synthase (598 aa).

Belongs to the TPP enzyme family. MenD subfamily. In terms of assembly, homodimer. The cofactor is Mg(2+). It depends on Mn(2+) as a cofactor. Requires thiamine diphosphate as cofactor.

It carries out the reaction isochorismate + 2-oxoglutarate + H(+) = 5-enolpyruvoyl-6-hydroxy-2-succinyl-cyclohex-3-ene-1-carboxylate + CO2. It functions in the pathway quinol/quinone metabolism; 1,4-dihydroxy-2-naphthoate biosynthesis; 1,4-dihydroxy-2-naphthoate from chorismate: step 2/7. Its pathway is cofactor biosynthesis; phylloquinone biosynthesis. In terms of biological role, catalyzes the thiamine diphosphate-dependent decarboxylation of 2-oxoglutarate and the subsequent addition of the resulting succinic semialdehyde-thiamine pyrophosphate anion to isochorismate to yield 2-succinyl-5-enolpyruvyl-6-hydroxy-3-cyclohexene-1-carboxylate (SEPHCHC). This Prochlorococcus marinus (strain NATL1A) protein is 2-succinyl-5-enolpyruvyl-6-hydroxy-3-cyclohexene-1-carboxylate synthase.